We begin with the raw amino-acid sequence, 653 residues long: 1-deoxy-D-xylulose-5-phosphate synthase (653 aa).

Residues His-86 and 127 to 129 (GHS) contribute to the thiamine diphosphate site. Asp-158 provides a ligand contact to Mg(2+). Thiamine diphosphate is bound by residues 159–160 (GA), Asn-187, and Phe-294. Position 187 (Asn-187) interacts with Mg(2+). The span at 309-324 (KLEKTTSEPPPKKEPR) shows a compositional bias: basic and acidic residues. Residues 309 to 343 (KLEKTTSEPPPKKEPRSPNAATAEPEAQPKPQPKP) form a disordered region. Glu-395 is a thiamine diphosphate binding site.

Belongs to the transketolase family. DXPS subfamily. As to quaternary structure, homodimer. The cofactor is Mg(2+). It depends on thiamine diphosphate as a cofactor.

It catalyses the reaction D-glyceraldehyde 3-phosphate + pyruvate + H(+) = 1-deoxy-D-xylulose 5-phosphate + CO2. Its pathway is metabolic intermediate biosynthesis; 1-deoxy-D-xylulose 5-phosphate biosynthesis; 1-deoxy-D-xylulose 5-phosphate from D-glyceraldehyde 3-phosphate and pyruvate: step 1/1. In terms of biological role, catalyzes the acyloin condensation reaction between C atoms 2 and 3 of pyruvate and glyceraldehyde 3-phosphate to yield 1-deoxy-D-xylulose-5-phosphate (DXP). The sequence is that of 1-deoxy-D-xylulose-5-phosphate synthase from Chromohalobacter salexigens (strain ATCC BAA-138 / DSM 3043 / CIP 106854 / NCIMB 13768 / 1H11).